The sequence spans 1434 residues: Nitric oxide synthase 1 (1434 aa).

The segment at 1-205 (MEDHMFGVQQ…LQGRGENNEL (205 aa)) is interaction with NOSIP. In terms of domain architecture, PDZ spans 17–99 (SVRLFKRKVG…ETHVVLILRG (83 aa)). 2 disordered regions span residues 112 to 192 (TGDG…KKAT) and 276 to 302 (NNPY…PSKC). An interaction with DYNLL1/PIN region spans residues 163-245 (YDDGQEAGSL…MGIQVDRDLD (83 aa)). Residues 285–299 (PPTSGKQSPTKNGSP) show a composition bias toward polar residues. Ser339 lines the (6R)-L-erythro-5,6,7,8-tetrahydrobiopterin pocket. Cys420 serves as a coordination point for heme b. 4 residues coordinate L-arginine: Gln483, Trp592, Tyr593, and Glu597. (6R)-L-erythro-5,6,7,8-tetrahydrobiopterin contacts are provided by Val682, Trp683, and Phe696. Tyr711 is a heme b binding site. The segment at 730-750 (KRRAIGFKKLAEAVKFSAKLM) is calmodulin-binding. Residues 760-940 (ATILYATETG…AFRTWAKKVF (181 aa)) enclose the Flavodoxin-like domain. Positions 766, 767, 768, 770, 771, 812, 813, and 817 each coordinate FMN. Residues Ser852, Ser862, and Ser863 each carry the phosphoserine modification. Positions 891, 896, 898, 924, and 928 each coordinate FMN. Residues 995 to 1242 (KRVSAARLLS…VRGAPSFHLP (248 aa)) enclose the FAD-binding FR-type domain. Residue Arg1015 participates in NADP(+) binding. His1037, Arg1178, Tyr1179, Tyr1180, Ser1181, Thr1196, and Ala1198 together coordinate FAD. Ser1201 contributes to the NADP(+) binding site. 4 residues coordinate FAD: Tyr1202, Val1215, Cys1216, and Ser1217. 10 residues coordinate NADP(+): Thr1256, Arg1289, Ser1318, Arg1319, Lys1325, Tyr1327, Gln1329, Asp1362, Thr1403, and Arg1405.

This sequence belongs to the NOS family. As to quaternary structure, homodimer. Interacts with DLG4; the interaction possibly being prevented by the association between NOS1 and CAPON. Forms a ternary complex with CAPON and RASD1. Forms a ternary complex with CAPON and SYN1. Interacts with ZDHHC23. Interacts with NOSIP; which may impair its synaptic location. Interacts with HTR4. Interacts with SLC6A4. Interacts with VAC14. Interacts (via N-terminal domain) with DLG4 (via N-terminal tandem pair of PDZ domains). Interacts with SLC6A4. Forms a complex with ASL, ASS1 and SLC7A1; the complex regulates cell-autonomous L-arginine synthesis and citrulline recycling while channeling extracellular L-arginine to nitric oxide synthesis pathway. Interacts with DMD; localizes NOS1 to sarcolemma in muscle cells. Interacts with DYNLL1; inhibits the nitric oxide synthase activity. The cofactor is heme b. FAD is required as a cofactor. It depends on FMN as a cofactor. Requires (6R)-L-erythro-5,6,7,8-tetrahydrobiopterin as cofactor. Ubiquitinated; mediated by STUB1/CHIP in the presence of Hsp70 and Hsp40 (in vitro). Isoform 1 is ubiquitously expressed: detected in skeletal muscle and brain, also in testis, lung and kidney, and at low levels in heart, adrenal gland and retina. Not detected in the platelets. Isoform 3 is expressed only in testis. Isoform 4 is detected in testis, skeletal muscle, lung, and kidney, at low levels in the brain, but not in the heart and adrenal gland.

The protein localises to the cell membrane. Its subcellular location is the sarcolemma. The protein resides in the cell projection. It is found in the dendritic spine. It catalyses the reaction 2 L-arginine + 3 NADPH + 4 O2 + H(+) = 2 L-citrulline + 2 nitric oxide + 3 NADP(+) + 4 H2O. With respect to regulation, stimulated by calcium/calmodulin. Inhibited by DYNLL1 that prevents the dimerization of the protein. Inhibited by NOSIP. Functionally, produces nitric oxide (NO) which is a messenger molecule with diverse functions throughout the body. In the brain and peripheral nervous system, NO displays many properties of a neurotransmitter. Probably has nitrosylase activity and mediates cysteine S-nitrosylation of cytoplasmic target proteins such SRR. In Homo sapiens (Human), this protein is Nitric oxide synthase 1.